We begin with the raw amino-acid sequence, 419 residues long: Lipid II:glycine glycyltransferase (419 aa).

This sequence belongs to the FemABX family.

The protein resides in the cytoplasm. It catalyses the reaction beta-D-GlcNAc-(1-&gt;4)-Mur2Ac(oyl-L-Ala-D-isoglutaminyl-L-Lys-D-Ala-D-Ala)-di-trans,octa-cis-undecaprenyl diphosphate + glycyl-tRNA(Gly) = beta-D-GlcNAc-(1-&gt;4)-Mur2Ac(oyl-L-Ala-D-isoglutaminyl-L-Lys-(N(6)-Gly)-D-Ala-D-Ala)-di-trans,octa-cis-undecaprenyl diphosphate + tRNA(Gly) + H(+). In terms of biological role, catalyzes the incorporation of amino acid(s) into the interchain peptide bridge of peptidoglycan, using aminoacyl-tRNA as amino acid donor. The chain is Lipid II:glycine glycyltransferase (femX) from Staphylococcus haemolyticus (strain JCSC1435).